The sequence spans 295 residues: MELIQDTSRPPLEYVKGVPLIKYFAEALGPLQSFQARPDDLLINTYPKSGTTWVSQILDMIYQGGDLEKCNRAPIYVRVPFLEVNDPGEPSGLETLKDTPPPRLIKSHLPLALLPQTLLDQKVKVVYVARNPKDVAVSYYHFHRMEKAHPEPGTWDSFLEKFMAGEVSYGSWYQHVQEWWELSRTHPVLYLFYEDMKENPKREIQKILEFVGRSLPEETMDFMVQHTSFKEMKKNPMTNYTTVPQELMDHSISPFMRKGMAGDWKTTFTVAQNERFDADYAEKMAGCSLSFRSEL.

48–53 (KSGTTW) contributes to the 3'-phosphoadenylyl sulfate binding site. Dopamine-binding positions include aspartate 86 and 106-108 (KSH). The Proton acceptor role is filled by histidine 108. The 3'-phosphoadenylyl sulfate site is built by arginine 130 and serine 138. Glutamate 146 is a binding site for dopamine. 3'-phosphoadenylyl sulfate-binding positions include tyrosine 193, 227–232 (TSFKEM), and 257–259 (RKG).

It belongs to the sulfotransferase 1 family. Homodimer. In terms of processing, the N-terminus is blocked. Liver, colon, kidney, lung, brain, spleen, small intestine, placenta and leukocyte.

It is found in the cytoplasm. The enzyme catalyses a phenol + 3'-phosphoadenylyl sulfate = an aryl sulfate + adenosine 3',5'-bisphosphate + H(+). It catalyses the reaction 4-nitrophenol + 3'-phosphoadenylyl sulfate = 4-nitrophenyl sulfate + adenosine 3',5'-bisphosphate. It carries out the reaction dopamine + 3'-phosphoadenylyl sulfate = dopamine 3-O-sulfate + adenosine 3',5'-bisphosphate + H(+). The catalysed reaction is dopamine + 3'-phosphoadenylyl sulfate = dopamine 4-O-sulfate + adenosine 3',5'-bisphosphate + H(+). The enzyme catalyses serotonin + 3'-phosphoadenylyl sulfate = serotonin O-sulfate + adenosine 3',5'-bisphosphate + H(+). It catalyses the reaction (R)-adrenaline + 3'-phosphoadenylyl sulfate = (R)-adrenaline 4'-O-sulfate + adenosine 3',5'-bisphosphate + H(+). It carries out the reaction (R)-noradrenaline + 3'-phosphoadenylyl sulfate = (R)-noradrenaline 4'-O-sulfate + adenosine 3',5'-bisphosphate + H(+). The catalysed reaction is 3,3',5-triiodo-L-thyronine + 3'-phosphoadenylyl sulfate = 3,3',5-triiodo-L-thyronine sulfate + adenosine 3',5'-bisphosphate + H(+). The enzyme catalyses 3,3',5'-triiodo-L-thyronine + 3'-phosphoadenylyl sulfate = 3,3',5'-triiodo-L-thyronine sulfate + adenosine 3',5'-bisphosphate + H(+). It catalyses the reaction 3,3'-diiodo-L-thyronine + 3'-phosphoadenylyl sulfate = 3,3'-diiodo-L-thyronine sulfate + adenosine 3',5'-bisphosphate + H(+). It carries out the reaction L-thyroxine + 3'-phosphoadenylyl sulfate = L-thyroxine sulfate + adenosine 3',5'-bisphosphate + H(+). Sulfotransferase that utilizes 3'-phospho-5'-adenylyl sulfate (PAPS) as sulfonate donor to catalyze the sulfate conjugation of phenolic monoamines (neurotransmitters such as dopamine, (R)-adrenaline/epinephrine, (R)-noradrenaline/norepinephrine and serotonin) and phenolic and catechol drugs. Catalyzes the sulfation of T4 (L-thyroxine/3,5,3',5'-tetraiodothyronine), T3 (3,5,3'-triiodothyronine), rT3 (3,3',5'-triiodothyronine) and 3,3'-T2 (3,3'-diiodothyronine), with a substrate preference of 3,3'-T2 &gt; rT3 &gt; T3 &gt; T4. This is Sulfotransferase 1A3 (SULT1A3) from Homo sapiens (Human).